The chain runs to 305 residues: Cell division control protein 2 homolog C (305 aa).

The Protein kinase domain maps to 4-297; the sequence is YEKLEKVGEG…AKAALDHPYF (294 aa). ATP contacts are provided by residues 10–18 and Lys33; that span reads VGEGTYGKV. Thr14 carries the post-translational modification Phosphothreonine. Tyr15 bears the Phosphotyrosine mark. Asp138 functions as the Proton acceptor in the catalytic mechanism. Thr172 bears the Phosphothreonine; by CAK mark.

This sequence belongs to the protein kinase superfamily. CMGC Ser/Thr protein kinase family. CDC2/CDKX subfamily.

The catalysed reaction is L-seryl-[protein] + ATP = O-phospho-L-seryl-[protein] + ADP + H(+). It carries out the reaction L-threonyl-[protein] + ATP = O-phospho-L-threonyl-[protein] + ADP + H(+). It catalyses the reaction [DNA-directed RNA polymerase] + ATP = phospho-[DNA-directed RNA polymerase] + ADP + H(+). Its function is as follows. Plays a key role in the control of the eukaryotic cell cycle. The chain is Cell division control protein 2 homolog C (CDC2C) from Antirrhinum majus (Garden snapdragon).